A 590-amino-acid polypeptide reads, in one-letter code: Arginine--tRNA ligase (590 aa).

A 'HIGH' region motif is present at residues 126–136; that stretch reads PNVAKEMHVGH.

Belongs to the class-I aminoacyl-tRNA synthetase family. In terms of assembly, monomer.

It is found in the cytoplasm. The enzyme catalyses tRNA(Arg) + L-arginine + ATP = L-arginyl-tRNA(Arg) + AMP + diphosphate. In Streptomyces avermitilis (strain ATCC 31267 / DSM 46492 / JCM 5070 / NBRC 14893 / NCIMB 12804 / NRRL 8165 / MA-4680), this protein is Arginine--tRNA ligase.